The primary structure comprises 200 residues: NADH-quinone oxidoreductase subunit C (200 aa).

Belongs to the complex I 30 kDa subunit family. NDH-1 is composed of 14 different subunits. Subunits NuoB, C, D, E, F, and G constitute the peripheral sector of the complex.

The protein resides in the cell inner membrane. It carries out the reaction a quinone + NADH + 5 H(+)(in) = a quinol + NAD(+) + 4 H(+)(out). In terms of biological role, NDH-1 shuttles electrons from NADH, via FMN and iron-sulfur (Fe-S) centers, to quinones in the respiratory chain. The immediate electron acceptor for the enzyme in this species is believed to be ubiquinone. Couples the redox reaction to proton translocation (for every two electrons transferred, four hydrogen ions are translocated across the cytoplasmic membrane), and thus conserves the redox energy in a proton gradient. This chain is NADH-quinone oxidoreductase subunit C, found in Cereibacter sphaeroides (strain ATCC 17029 / ATH 2.4.9) (Rhodobacter sphaeroides).